A 737-amino-acid chain; its full sequence is Palmitoyltransferase akr1 (737 aa).

The segment at 1 to 60 is disordered; the sequence is MSSGDPPSGLQASGSNSSAALGLSPPSAPSGKSAATPPKVATDDASVELSSMKSERSPAK. Topologically, residues 1 to 314 are cytoplasmic; sequence MSSGDPPSGL…YVRDKAIMSK (314 aa). Residues 7–38 are compositionally biased toward low complexity; the sequence is PSGLQASGSNSSAALGLSPPSAPSGKSAATPP. ANK repeat units follow at residues 97–126, 131–160, 164–193, 197–226, and 230–259; these read EGITPLHWAAINNQYAMCKFLIDSGADVNA, SVATPAMWAAQRCHYYIVHLLLQYGADPLL, QGYNILHLATIDGNAFLLVLLLHQEIPVDV, QGHTGLMWAAYKGYPACVDLFLRWGANPNA, and GGLAPLHWALVKGSLPCVLKILEYGADRFA. A run of 2 helical transmembrane segments spans residues 315-335 and 336-356; these read FFFFWPFLLLFVVLWILSNMV and VYFAIPVAAVAVFGLQWVAKK. The Cytoplasmic segment spans residues 357-372; that stretch reads AASQGPSEFRIIQKTP. The chain crosses the membrane as a helical span at residues 373-393; it reads FLAGVFAGSLFWVFVRYVLYV. Residues 394–402 are Lumenal-facing; that stretch reads LPATYSTNP. The chain crosses the membrane as a helical span at residues 403–423; sequence FLNLGFVVFFSLTTYFYFYSM. The Cytoplasmic segment spans residues 424–500; that stretch reads VADPGYVPKL…NCVGVNNLRQ (77 aa). The DHHC domain occupies 456–506; the sequence is NFCVYCMIRRPLRSKHCRRCSRCVAKHDHHCPWIDNCVGVNNLRQFVLYIL. Residue C486 is the S-palmitoyl cysteine intermediate of the active site. Residues 501–521 form a helical membrane-spanning segment; the sequence is FVLYILCLEIGIILFLHLTFN. The Lumenal portion of the chain corresponds to 522 to 549; sequence YINGLPAPAEPICNILNDQICSFVLRDT. A helical membrane pass occupies residues 550-570; the sequence is FTLLLDVWIAIQLVWVTMLGV. The Cytoplasmic segment spans residues 571 to 737; the sequence is VQLVQVSRNQ…VAYDEAADIV (167 aa).

The protein belongs to the DHHC palmitoyltransferase family. AKR/ZDHHC17 subfamily.

It localises to the early endosome membrane. Its subcellular location is the golgi apparatus membrane. It catalyses the reaction L-cysteinyl-[protein] + hexadecanoyl-CoA = S-hexadecanoyl-L-cysteinyl-[protein] + CoA. Palmitoyltransferase specific for casein kinase 1. The polypeptide is Palmitoyltransferase akr1 (akr1) (Emericella nidulans (strain FGSC A4 / ATCC 38163 / CBS 112.46 / NRRL 194 / M139) (Aspergillus nidulans)).